The chain runs to 449 residues: Metacaspase-1 (449 aa).

The tract at residues 1-132 (MFPGQGRHTY…YSRPPTNQQS (132 aa)) is disordered. Over residues 10–26 (YGGQQQLLQLQQYNYGP) the composition is skewed to low complexity. Pro residues predominate over residues 27 to 55 (PQGPPPNGYGPPPGPPPNGYGPPPGPPPQ). The span at 56 to 66 (NSWGYGNPSGT) shows a compositional bias: polar residues. 2 stretches are compositionally biased toward low complexity: residues 67–91 (QSSN…YQRP) and 98–112 (QSGN…NGEP). A compositionally biased stretch (polar residues) spans 119 to 132 (GSGQYSRPPTNQQS). Active-site residues include H232 and C293.

It belongs to the peptidase C14B family.

Involved in cell death (apoptosis). This is Metacaspase-1 (MCA1) from Lodderomyces elongisporus (strain ATCC 11503 / CBS 2605 / JCM 1781 / NBRC 1676 / NRRL YB-4239) (Yeast).